The sequence spans 114 residues: uncharacterized protein (114 aa).

This sequence to M.kandleri MK0008.

This is an uncharacterized protein from Methanocaldococcus jannaschii (strain ATCC 43067 / DSM 2661 / JAL-1 / JCM 10045 / NBRC 100440) (Methanococcus jannaschii).